We begin with the raw amino-acid sequence, 142 residues long: Glia maturation factor beta (142 aa).

N-acetylserine is present on Ser-2. The region spanning 4-139 (SLVVCDVAED…TEEWLREKLG (136 aa)) is the ADF-H domain.

The protein belongs to the actin-binding proteins ADF family. GMF subfamily. Phosphorylated; stimulated by phorbol ester.

In terms of biological role, this protein causes differentiation of brain cells, stimulation of neural regeneration, and inhibition of proliferation of tumor cells. The protein is Glia maturation factor beta (Gmfb) of Mus musculus (Mouse).